We begin with the raw amino-acid sequence, 509 residues long: Kelch repeat protein M-T9 (509 aa).

The BTB domain maps to Ser15–Asp79. Kelch repeat units lie at residues Val274–Gly320, Tyr321–Glu368, Trp370–Asn415, Arg416–Lys463, and Ile465–Ile509.

Belongs to the poxviruses Kelch family.

This chain is Kelch repeat protein M-T9, found in Myxoma virus (strain Lausanne) (MYXV).